The sequence spans 101 residues: MAKKSKIVKNNKRRDIVARYAQRRAELKQIIQSPTSSYEQRLDAQRALSRQPRDASAVRLRNRDAIDGRPRGHLRKFGLSRVRVRELAHAGQLPGVRKASW.

Residues 35 to 56 (TSSYEQRLDAQRALSRQPRDAS) are disordered.

The protein belongs to the universal ribosomal protein uS14 family. As to quaternary structure, part of the 30S ribosomal subunit. Contacts proteins S3 and S10.

Functionally, binds 16S rRNA, required for the assembly of 30S particles and may also be responsible for determining the conformation of the 16S rRNA at the A site. The polypeptide is Small ribosomal subunit protein uS14A (Mycobacterium marinum (strain ATCC BAA-535 / M)).